The sequence spans 755 residues: Serine/threonine-protein kinase GL21140 (755 aa).

Low complexity predominate over residues 18-52 (QASASGSGTPKKTAASSAAAQNSKQLLDQLSQQQK). Residues 18–128 (QASASGSGTP…GSANTNGSAS (111 aa)) are disordered. 2 stretches are compositionally biased toward basic and acidic residues: residues 53–66 (AQEEAETHSRRDCD) and 74–84 (EPEKDLDELRD). Residues 87–99 (GSLTGSGSVGKSN) show a composition bias toward polar residues. Residues 100-128 (GSLSGASSTTSAPAGTSTPGSANTNGSAS) show a composition bias toward low complexity. Doublecortin domains lie at 157–243 (HRIK…VDYN) and 314–397 (RIVT…VDDF). In terms of domain architecture, Protein kinase spans 484 to 742 (YTLSQIIGDG…SEDILDHYWT (259 aa)). Residues 490–498 (IGDGNFAIV) and K513 each bind ATP. D605 acts as the Proton acceptor in catalysis.

The protein belongs to the protein kinase superfamily. CAMK Ser/Thr protein kinase family. CaMK subfamily.

The enzyme catalyses L-seryl-[protein] + ATP = O-phospho-L-seryl-[protein] + ADP + H(+). It catalyses the reaction L-threonyl-[protein] + ATP = O-phospho-L-threonyl-[protein] + ADP + H(+). This chain is Serine/threonine-protein kinase GL21140, found in Drosophila persimilis (Fruit fly).